The chain runs to 309 residues: D-galacturonate reductase (309 aa).

Tyr50 acts as the Proton donor in catalysis. Residue His109 participates in substrate binding. 210-264 (SPLGSTGSPLMSADPVVKIAEKKGISPTTVLLSYHVNRGSTVLAKSVTPARIKAN) lines the NADP(+) pocket.

It belongs to the aldo/keto reductase family.

It catalyses the reaction L-galactonate + NADP(+) = aldehydo-D-galacturonate + NADPH + H(+). It participates in carbohydrate acid metabolism. In terms of biological role, mediates the reduction of D-galacturonate to L-galactonate, the first step in D-galacturonate catabolic process. Also has activity with D-glucuronate and DL-glyceraldehyde. No activity is observed with D-glucose, D-fructose, D-xylose, D-galactose, L-arabinose or D-mannose. Activity is seen only with NADPH and not with NADH. The polypeptide is D-galacturonate reductase (gar1) (Hypocrea jecorina (Trichoderma reesei)).